The chain runs to 104 residues: UPF0213 protein plu4503 (104 aa).

In terms of domain architecture, GIY-YIG spans 4 to 79 (NQWVLYLLKT…KQLSKQQKER (76 aa)).

The protein belongs to the UPF0213 family.

The chain is UPF0213 protein plu4503 from Photorhabdus laumondii subsp. laumondii (strain DSM 15139 / CIP 105565 / TT01) (Photorhabdus luminescens subsp. laumondii).